Reading from the N-terminus, the 453-residue chain is Transcription factor radR (453 aa).

Over residues 1 to 30 (MPNNLQHQEGSYSLRSSNDVSPADDWTQTN) the composition is skewed to polar residues. The segment at 1 to 45 (MPNNLQHQEGSYSLRSSNDVSPADDWTQTNDPKEKKRIQNRVAQR) is disordered. The bZIP domain maps to 30–62 (NDPKEKKRIQNRVAQRTYRNRIRARLEELENKI). The tract at residues 33–50 (KEKKRIQNRVAQRTYRNR) is basic motif. Residues 51–58 (IRARLEEL) are leucine-zipper. The disordered stretch occupies residues 160–184 (APRAAQARSIAPTSTGMHQISPSYG). Polar residues predominate over residues 170 to 181 (APTSTGMHQISP).

This sequence belongs to the bZIP family.

The protein resides in the nucleus. Functionally, transcription factor that positively regulates the expression of the gene clusters that mediate the biosynthesis of pestheic acid, a diphenyl ether which is a biosynthetic precursor of the unique chloropupukeananes. In Floropilus chiversii (Chaetomium chiversii), this protein is Transcription factor radR.